Reading from the N-terminus, the 874-residue chain is AP-1 complex subunit gamma-1 (874 aa).

The 113-residue stretch at 761-873 (TVAKSHTVYT…QDQTDWAQPS (113 aa)) folds into the GAE domain.

It belongs to the adaptor complexes large subunit family. As to quaternary structure, adaptor protein complex 1 (AP-1) is a heterotetramer composed of two large adaptins (gamma-type subunit APL4 and beta-type subunit APL2), a medium adaptin (mu-type subunit APM1) and a small adaptin (sigma-type subunit APS1). AP-1 interacts with clathrin.

The protein localises to the cytoplasmic vesicle. The protein resides in the clathrin-coated vesicle membrane. Its subcellular location is the golgi apparatus. Its function is as follows. Adaptins are components of the adaptor complexes which link clathrin to receptors in coated vesicles. Clathrin-associated protein complexes are believed to interact with the cytoplasmic tails of membrane proteins, leading to their selection and concentration. The AP-1 complex interacts directly with clathrin. Required for apical growth extension. This Mycosarcoma maydis (Corn smut fungus) protein is AP-1 complex subunit gamma-1 (APL4).